The chain runs to 1171 residues: ATP-dependent helicase/deoxyribonuclease subunit B (1171 aa).

The 301-residue stretch at 1–301 (MSLRFVIGRA…AHLEMHYEAR (301 aa)) folds into the UvrD-like helicase ATP-binding domain. 8–15 (GRAGSGKS) lines the ATP pocket. Positions 281–587 (MKQPRFHSQA…QFANIPPSLD (307 aa)) constitute a UvrD-like helicase C-terminal domain. 4 residues coordinate [4Fe-4S] cluster: Cys-805, Cys-1129, Cys-1132, and Cys-1138.

It belongs to the helicase family. AddB/RexB type 1 subfamily. In terms of assembly, heterodimer of AddA and AddB. It depends on Mg(2+) as a cofactor. [4Fe-4S] cluster is required as a cofactor.

The heterodimer acts as both an ATP-dependent DNA helicase and an ATP-dependent, dual-direction single-stranded exonuclease. Recognizes the chi site generating a DNA molecule suitable for the initiation of homologous recombination. The AddB subunit has 5' -&gt; 3' nuclease activity but not helicase activity. In Bacillus mycoides (strain KBAB4) (Bacillus weihenstephanensis), this protein is ATP-dependent helicase/deoxyribonuclease subunit B.